Reading from the N-terminus, the 74-residue chain is Complement C5a anaphylatoxin (74 aa).

Residues 15 to 44 (YAMLKKCCYDGAYRNDDETCEERAARIKIG) form an involved in C5AR1 binding region. Cystine bridges form between Cys-21–Cys-47, Cys-22–Cys-54, and Cys-34–Cys-55. In terms of domain architecture, Anaphylatoxin-like spans 21 to 55 (CCYDGAYRNDDETCEERAARIKIGPKCVKAFKDCC). The required for 90% of C5a activity; although Arg-74 is not essential stretch occupies residues 72-74 (LGR).

It localises to the secreted. In terms of biological role, mediator of local inflammatory process released following cleavage by C5 convertase. Acts by binding to its receptor (C5AR1 or C5AR2), activating G protein-coupled receptor signaling and inducing a variety of responses including intracellular calcium release, contraction of smooth muscle, increased vascular permeability, and histamine release from mast cells and basophilic leukocytes. C5a is also a potent chemokine which stimulates the locomotion of polymorphonuclear leukocytes and directs their migration toward sites of inflammation. In Sus scrofa (Pig), this protein is Complement C5a anaphylatoxin (C5).